The following is a 302-amino-acid chain: Sulfate adenylyltransferase subunit 2 (302 aa).

It belongs to the PAPS reductase family. CysD subfamily. Heterodimer composed of CysD, the smaller subunit, and CysN.

The enzyme catalyses sulfate + ATP + H(+) = adenosine 5'-phosphosulfate + diphosphate. Its pathway is sulfur metabolism; hydrogen sulfide biosynthesis; sulfite from sulfate: step 1/3. With CysN forms the ATP sulfurylase (ATPS) that catalyzes the adenylation of sulfate producing adenosine 5'-phosphosulfate (APS) and diphosphate, the first enzymatic step in sulfur assimilation pathway. APS synthesis involves the formation of a high-energy phosphoric-sulfuric acid anhydride bond driven by GTP hydrolysis by CysN coupled to ATP hydrolysis by CysD. This is Sulfate adenylyltransferase subunit 2 from Serratia proteamaculans (strain 568).